A 212-amino-acid polypeptide reads, in one-letter code: Glycerol-3-phosphate acyltransferase (212 aa).

The next 5 membrane-spanning stretches (helical) occupy residues 3-23 (ILLA…VVVS), 51-71 (KAAI…VWLA), 78-98 (DVAV…PVFF), 115-135 (AVHP…AFFF), and 139-159 (SLAA…LFGT).

The protein belongs to the PlsY family. In terms of assembly, probably interacts with PlsX.

It is found in the cell inner membrane. The catalysed reaction is an acyl phosphate + sn-glycerol 3-phosphate = a 1-acyl-sn-glycero-3-phosphate + phosphate. The protein operates within lipid metabolism; phospholipid metabolism. Its function is as follows. Catalyzes the transfer of an acyl group from acyl-phosphate (acyl-PO(4)) to glycerol-3-phosphate (G3P) to form lysophosphatidic acid (LPA). This enzyme utilizes acyl-phosphate as fatty acyl donor, but not acyl-CoA or acyl-ACP. This is Glycerol-3-phosphate acyltransferase from Burkholderia ambifaria (strain MC40-6).